Consider the following 613-residue polypeptide: Serine protease FAM111A (613 aa).

Residues 1–72 (MSCKKRKSQI…TRQDQTPPLN (72 aa)) form a disordered region. K19 participates in a covalent cross-link: Glycyl lysine isopeptide (Lys-Gly) (interchain with G-Cter in SUMO2). S25 is subject to Phosphoserine. A Glycyl lysine isopeptide (Lys-Gly) (interchain with G-Cter in SUMO2) cross-link involves residue K29. The span at 40–56 (VDSKKMPRDITNTRDQR) shows a compositional bias: basic and acidic residues. A Glycyl lysine isopeptide (Lys-Gly) (interchain with G-Cter in SUMO2) cross-link involves residue K62. Catalysis depends on charge relay system residues H383, D437, and S543.

This sequence belongs to the FAM111 family. Interacts (via PIP-box) with PCNA; this interaction is direct. Post-translationally, autocatalytically cleaved; autocatalytic cleavage takes place in trans.

Its subcellular location is the nucleus. It is found in the chromosome. It localises to the cytoplasm. Single-stranded DNA-binding serine protease that mediates the proteolytic cleavage of covalent DNA-protein cross-links (DPCs) during DNA synthesis, thereby playing a key role in maintaining genomic integrity. DPCs are highly toxic DNA lesions that interfere with essential chromatin transactions, such as replication and transcription, and which are induced by reactive agents, such as UV light or formaldehyde. Protects replication fork from stalling by removing DPCs, such as covalently trapped topoisomerase 1 (TOP1) adducts on DNA lesion, or poly(ADP-ribose) polymerase 1 (PARP1)-DNA complexes trapped by PARP inhibitors. Required for PCNA loading on replication sites. Promotes S-phase entry and DNA synthesis. The polypeptide is Serine protease FAM111A (Mus musculus (Mouse)).